Here is a 1383-residue protein sequence, read N- to C-terminus: PAS domain-containing serine/threonine-protein kinase (1383 aa).

N-acetylmethionine is present on methionine 1. Residue serine 19 is modified to Phosphoserine. Threonine 31 bears the Phosphothreonine mark. 2 consecutive PAS domains span residues serine 117–aspartate 188 and tyrosine 333–leucine 400. A Phosphoserine modification is found at serine 1000. The 253-residue stretch at tyrosine 1059 to valine 1311 folds into the Protein kinase domain. Residues leucine 1065–valine 1073, lysine 1088, and glutamate 1142–aspartate 1149 contribute to the ATP site. Aspartate 1188 functions as the Proton acceptor in the catalytic mechanism. Aspartate 1206 serves as a coordination point for ATP. Residues threonine 1221 and threonine 1225 each carry the phosphothreonine; by autocatalysis modification. The segment at glycine 1344–serine 1383 is disordered. A compositionally biased stretch (basic and acidic residues) spans arginine 1364–aspartate 1377.

The protein belongs to the protein kinase superfamily. CAMK Ser/Thr protein kinase family. Autophosphorylated on Thr-1221 and Thr-1225. Autophosphorylation is activated by phospholipids. Ubiquitously expressed. Strongly up-regulated in postmeiotic germ cells during spermatogenesis.

The protein resides in the cytoplasm. It is found in the nucleus. It carries out the reaction L-seryl-[protein] + ATP = O-phospho-L-seryl-[protein] + ADP + H(+). It catalyses the reaction L-threonyl-[protein] + ATP = O-phospho-L-threonyl-[protein] + ADP + H(+). Its activity is regulated as follows. Protein kinase activity is inhibited by the first PAS domain: binding of an unidentified ligand desinhibits the protein kinase activity. May be activated by autophosphorylation on Thr-1221 and Thr-1225. Autophosphorylation is enhanced upon phosphatidylinositol monophosphate (phosphatidylinositol 4-phosphate) binding and inhibited upon phosphatidylinositol bi- and tri-phosphate binding. In contrast, phosphorylation of target proteins is inhibited upon all phosphatidylinositol-binding (phosphatidylinositol mono- bi- and tri-phosphate). In terms of biological role, serine/threonine-protein kinase involved in energy homeostasis and protein translation. Phosphorylates EEF1A1, GYS1, PDX1 and RPS6. Probably plays a role under changing environmental conditions (oxygen, glucose, nutrition), rather than under standard conditions. Acts as a sensor involved in energy homeostasis: regulates glycogen synthase synthesis by mediating phosphorylation of GYS1, leading to GYS1 inactivation. May be involved in glucose-stimulated insulin production in pancreas and regulation of glucagon secretion by glucose in alpha cells; however such data require additional evidences. May play a role in regulation of protein translation by phosphorylating EEF1A1, leading to increase translation efficiency. May also participate in respiratory regulation. This chain is PAS domain-containing serine/threonine-protein kinase (Pask), found in Mus musculus (Mouse).